Consider the following 302-residue polypeptide: Homoserine O-acetyltransferase (302 aa).

Catalysis depends on Cys-142, which acts as the Acyl-thioester intermediate. Substrate contacts are provided by Lys-163 and Ser-192. Residue His-235 is the Proton acceptor of the active site. Glu-237 is an active-site residue. A substrate-binding site is contributed by Arg-249.

Belongs to the MetA family.

The protein localises to the cytoplasm. It carries out the reaction L-homoserine + acetyl-CoA = O-acetyl-L-homoserine + CoA. It functions in the pathway amino-acid biosynthesis; L-methionine biosynthesis via de novo pathway; O-acetyl-L-homoserine from L-homoserine: step 1/1. In terms of biological role, transfers an acetyl group from acetyl-CoA to L-homoserine, forming acetyl-L-homoserine. The chain is Homoserine O-acetyltransferase from Geobacillus kaustophilus (strain HTA426).